Here is a 347-residue protein sequence, read N- to C-terminus: GMP reductase (347 aa).

Residue 108 to 131 (ADFEKTVQILALNPALNFVCIDVA) participates in NADP(+) binding. Residues glycine 181 and glycine 183 each coordinate K(+). Cysteine 186 acts as the Thioimidate intermediate in catalysis. Residue 216–239 (IVSDGGCTMPGDVAKAFGGGADFV) coordinates NADP(+).

The protein belongs to the IMPDH/GMPR family. GuaC type 1 subfamily. As to quaternary structure, homotetramer.

It carries out the reaction IMP + NH4(+) + NADP(+) = GMP + NADPH + 2 H(+). Functionally, catalyzes the irreversible NADPH-dependent deamination of GMP to IMP. It functions in the conversion of nucleobase, nucleoside and nucleotide derivatives of G to A nucleotides, and in maintaining the intracellular balance of A and G nucleotides. In Salmonella typhi, this protein is GMP reductase.